We begin with the raw amino-acid sequence, 283 residues long: Lipoyl synthase (283 aa).

Residues Cys-35, Cys-40, Cys-46, Cys-61, Cys-65, Cys-68, and Ser-273 each contribute to the [4Fe-4S] cluster site. Residues 47-262 enclose the Radical SAM core domain; sequence FRERQATFLI…RAAALATGFA (216 aa).

It belongs to the radical SAM superfamily. Lipoyl synthase family. [4Fe-4S] cluster is required as a cofactor.

The protein localises to the cytoplasm. It catalyses the reaction [[Fe-S] cluster scaffold protein carrying a second [4Fe-4S](2+) cluster] + N(6)-octanoyl-L-lysyl-[protein] + 2 oxidized [2Fe-2S]-[ferredoxin] + 2 S-adenosyl-L-methionine + 4 H(+) = [[Fe-S] cluster scaffold protein] + N(6)-[(R)-dihydrolipoyl]-L-lysyl-[protein] + 4 Fe(3+) + 2 hydrogen sulfide + 2 5'-deoxyadenosine + 2 L-methionine + 2 reduced [2Fe-2S]-[ferredoxin]. It functions in the pathway protein modification; protein lipoylation via endogenous pathway; protein N(6)-(lipoyl)lysine from octanoyl-[acyl-carrier-protein]: step 2/2. Its function is as follows. Catalyzes the radical-mediated insertion of two sulfur atoms into the C-6 and C-8 positions of the octanoyl moiety bound to the lipoyl domains of lipoate-dependent enzymes, thereby converting the octanoylated domains into lipoylated derivatives. The polypeptide is Lipoyl synthase (Geobacter metallireducens (strain ATCC 53774 / DSM 7210 / GS-15)).